Here is a 214-residue protein sequence, read N- to C-terminus: tRNA (guanine-N(7)-)-methyltransferase (214 aa).

4 residues coordinate S-adenosyl-L-methionine: E44, E69, D96, and D118. The active site involves D118. K122 is a substrate binding site. An interaction with RNA region spans residues 124-129 (RHEKRR). Substrate is bound by residues D154 and 192–195 (TEYE).

The protein belongs to the class I-like SAM-binding methyltransferase superfamily. TrmB family.

The enzyme catalyses guanosine(46) in tRNA + S-adenosyl-L-methionine = N(7)-methylguanosine(46) in tRNA + S-adenosyl-L-homocysteine. The protein operates within tRNA modification; N(7)-methylguanine-tRNA biosynthesis. Catalyzes the formation of N(7)-methylguanine at position 46 (m7G46) in tRNA. The sequence is that of tRNA (guanine-N(7)-)-methyltransferase from Lacticaseibacillus casei (strain BL23) (Lactobacillus casei).